The sequence spans 218 residues: Thiamine-phosphate synthase (218 aa).

4-amino-2-methyl-5-(diphosphooxymethyl)pyrimidine is bound by residues 36-40 (QVRSK) and Asp70. Mg(2+)-binding residues include Asp71 and Asp94. Thr113 is a binding site for 4-amino-2-methyl-5-(diphosphooxymethyl)pyrimidine. 141-143 (TPT) serves as a coordination point for 2-[(2R,5Z)-2-carboxy-4-methylthiazol-5(2H)-ylidene]ethyl phosphate. Position 144 (Lys144) interacts with 4-amino-2-methyl-5-(diphosphooxymethyl)pyrimidine.

The protein belongs to the thiamine-phosphate synthase family. It depends on Mg(2+) as a cofactor.

It catalyses the reaction 2-[(2R,5Z)-2-carboxy-4-methylthiazol-5(2H)-ylidene]ethyl phosphate + 4-amino-2-methyl-5-(diphosphooxymethyl)pyrimidine + 2 H(+) = thiamine phosphate + CO2 + diphosphate. The enzyme catalyses 2-(2-carboxy-4-methylthiazol-5-yl)ethyl phosphate + 4-amino-2-methyl-5-(diphosphooxymethyl)pyrimidine + 2 H(+) = thiamine phosphate + CO2 + diphosphate. The catalysed reaction is 4-methyl-5-(2-phosphooxyethyl)-thiazole + 4-amino-2-methyl-5-(diphosphooxymethyl)pyrimidine + H(+) = thiamine phosphate + diphosphate. It participates in cofactor biosynthesis; thiamine diphosphate biosynthesis; thiamine phosphate from 4-amino-2-methyl-5-diphosphomethylpyrimidine and 4-methyl-5-(2-phosphoethyl)-thiazole: step 1/1. Its function is as follows. Condenses 4-methyl-5-(beta-hydroxyethyl)thiazole monophosphate (THZ-P) and 2-methyl-4-amino-5-hydroxymethyl pyrimidine pyrophosphate (HMP-PP) to form thiamine monophosphate (TMP). This is Thiamine-phosphate synthase from Corynebacterium jeikeium (strain K411).